A 202-amino-acid chain; its full sequence is Ras-related protein Rab-1A (202 aa).

Residues Gly15–Cys23, Tyr33–Thr40, Asp63–Gln67, Asn121–Asp124, and Ser151–Lys153 contribute to the GTP site. The short motif at Phe37–Phe45 is the Effector region element. The interval Gln180–Cys202 is disordered. Residues Cys201 and Cys202 are each lipidated (S-geranylgeranyl cysteine).

It belongs to the small GTPase superfamily. Rab family.

It is found in the cell membrane. The chain is Ras-related protein Rab-1A (rab1A) from Dictyostelium discoideum (Social amoeba).